Reading from the N-terminus, the 292-residue chain is 4-diphosphocytidyl-2-C-methyl-D-erythritol kinase (292 aa).

The active site involves Lys20. Pro103–Ser113 provides a ligand contact to ATP. Residue Asp145 is part of the active site.

The protein belongs to the GHMP kinase family. IspE subfamily.

The enzyme catalyses 4-CDP-2-C-methyl-D-erythritol + ATP = 4-CDP-2-C-methyl-D-erythritol 2-phosphate + ADP + H(+). The protein operates within isoprenoid biosynthesis; isopentenyl diphosphate biosynthesis via DXP pathway; isopentenyl diphosphate from 1-deoxy-D-xylulose 5-phosphate: step 3/6. Its function is as follows. Catalyzes the phosphorylation of the position 2 hydroxy group of 4-diphosphocytidyl-2C-methyl-D-erythritol. This chain is 4-diphosphocytidyl-2-C-methyl-D-erythritol kinase, found in Cupriavidus metallidurans (strain ATCC 43123 / DSM 2839 / NBRC 102507 / CH34) (Ralstonia metallidurans).